Reading from the N-terminus, the 936-residue chain is Translation initiation factor IF-2 (936 aa).

A disordered region spans residues 102-332; it reads PEPGPVLKKD…SGSRQKFRKM (231 aa). A compositionally biased stretch (basic and acidic residues) spans 108–119; the sequence is LKKDHVHEEPEK. The segment covering 127 to 137 has biased composition (acidic residues); it reads SEPEVEPEVEP. The segment covering 151–160 has biased composition (low complexity); it reads PTEAVSVPEP. Over residues 182 to 194 the composition is skewed to polar residues; that stretch reads QSSTMKAQASPEM. Basic and acidic residues-rich tracts occupy residues 217 to 227 and 237 to 267; these read SALDRGSESDR and KEQADELKGEFENAGKAEGDKKPAKSGEAKT. Low complexity predominate over residues 272 to 281; the sequence is KAAGTTGSAA. A compositionally biased stretch (basic residues) spans 287-297; the sequence is SKKKKGGKKKK. In terms of domain architecture, tr-type G spans 433–603; sequence IRPPVVTIMG…LMEAEIRELK (171 aa). The segment at 442-449 is G1; sequence GHVDHGKT. 442–449 provides a ligand contact to GTP; that stretch reads GHVDHGKT. The tract at residues 467–471 is G2; sequence GITQH. Residues 489 to 492 form a G3 region; sequence DTPG. Residues 489–493 and 543–546 each bind GTP; these read DTPGH and NKID. A G4 region spans residues 543–546; the sequence is NKID. The interval 579-581 is G5; it reads SAK.

It belongs to the TRAFAC class translation factor GTPase superfamily. Classic translation factor GTPase family. IF-2 subfamily.

The protein localises to the cytoplasm. One of the essential components for the initiation of protein synthesis. Protects formylmethionyl-tRNA from spontaneous hydrolysis and promotes its binding to the 30S ribosomal subunits. Also involved in the hydrolysis of GTP during the formation of the 70S ribosomal complex. This chain is Translation initiation factor IF-2, found in Prosthecochloris aestuarii (strain DSM 271 / SK 413).